The sequence spans 225 residues: tRNA 2'-phosphotransferase 1 (225 aa).

The segment at 1 to 21 (MDCETRGRGRRGRGNRNEESR) is disordered.

It belongs to the KptA/TPT1 family.

It catalyses the reaction 2'-phospho-[ligated tRNA] + NAD(+) = mature tRNA + ADP-alpha-D-ribose 1'',2''-cyclic phosphate + nicotinamide. Its function is as follows. Catalyzes the last step of tRNA splicing, the transfer of the splice junction 2'-phosphate from ligated tRNA to NAD to produce ADP-ribose 1''-2'' cyclic phosphate. The polypeptide is tRNA 2'-phosphotransferase 1 (trpt1) (Danio rerio (Zebrafish)).